The primary structure comprises 538 residues: Ubiquitin domain-containing protein DSK2a (538 aa).

The Ubiquitin-like domain occupies 18–93 (VAVNVRCSNG…VHMVRGFVPS (76 aa)). The disordered stretch occupies residues 95–120 (PSAPAANAGNQTTAPQAVGSNDSSNL). Residues 102–119 (AGNQTTAPQAVGSNDSSN) are compositionally biased toward polar residues. 2 STI1 domains span residues 138–179 (GNAM…QNLM) and 192–231 (NPQM…MREM). The segment at 289–316 (QGVTTQGSDTSNNISAPNAETGTPNANP) is disordered. STI1 domains lie at 357–394 (SPLG…MNQL) and 398–433 (NPQL…MQQM). The 45-residue stretch at 491-535 (PPEERFATQLQQLQEMGFYDRAENIRALLATNGNVNAAVERLLGS) folds into the UBA domain.

As to quaternary structure, interacts with 'Lys-48'-linked polyubiquitin chains via its UBA domain. Interacts with RPN10 and RPN13. Interacts with PEX2 and PEX12. Ubiquitous with a strong expression level in inflorescence.

It localises to the nucleus. The protein localises to the cytoplasm. Functionally, binds and presumably selects ubiquitin-conjugates for destruction. Prefers multiubiquitin chains rather than single ubiquitins, with a binding affinity for 'Lys-48'-linked ubiquitin chains. Acts as a ubiquitin receptor that associates with the 26S proteasomal docking subunit RPN10 for the indirect recognition of ubiquitinated substrates of ubiquitin/26S proteasome-mediated proteolysis (UPP). This Arabidopsis thaliana (Mouse-ear cress) protein is Ubiquitin domain-containing protein DSK2a (DSK2A).